The following is a 277-amino-acid chain: Glutamate racemase (277 aa).

Residues 25-26 (DS) and 57-58 (YG) contribute to the substrate site. Cysteine 89 serves as the catalytic Proton donor/acceptor. Substrate is bound at residue 90 to 91 (NT). The Proton donor/acceptor role is filled by cysteine 204. 205-206 (TH) is a substrate binding site.

Belongs to the aspartate/glutamate racemases family.

The enzyme catalyses L-glutamate = D-glutamate. It functions in the pathway cell wall biogenesis; peptidoglycan biosynthesis. Functionally, provides the (R)-glutamate required for cell wall biosynthesis. In Brucella abortus (strain 2308), this protein is Glutamate racemase.